We begin with the raw amino-acid sequence, 67 residues long: Large ribosomal subunit protein uL29 (67 aa).

The protein belongs to the universal ribosomal protein uL29 family.

This is Large ribosomal subunit protein uL29 from Solibacter usitatus (strain Ellin6076).